The sequence spans 261 residues: 14-3-3 protein 9 (261 aa).

Residues P239–E261 form a disordered region.

The protein belongs to the 14-3-3 family. As to quaternary structure, homodimer.

This chain is 14-3-3 protein 9 (TFT9), found in Solanum lycopersicum (Tomato).